Here is a 246-residue protein sequence, read N- to C-terminus: V-type proton ATPase subunit D 1 (246 aa).

The protein belongs to the V-ATPase D subunit family. As to quaternary structure, V-ATPase is a heteromultimeric enzyme made up of two complexes: the ATP-hydrolytic V1 complex and the proton translocation V0 complex. The V1 complex consists of three catalytic AB heterodimers that form a heterohexamer, three peripheral stalks each consisting of EG heterodimers, one central rotor including subunits D and F, and the regulatory subunits C and H. The proton translocation complex V0 consists of the proton transport subunit a, a ring of proteolipid subunits c9c'', rotary subunit d, subunits e and f, and the accessory subunits VhaAC45 and ATP6AP2.

Its function is as follows. Subunit of the V1 complex of vacuolar(H+)-ATPase (V-ATPase), a multisubunit enzyme composed of a peripheral complex (V1) that hydrolyzes ATP and a membrane integral complex (V0) that translocates protons. V-ATPase is responsible for acidifying and maintaining the pH of intracellular compartments and in some cell types, is targeted to the plasma membrane, where it is responsible for acidifying the extracellular environment. In Drosophila melanogaster (Fruit fly), this protein is V-type proton ATPase subunit D 1 (Vha36-1).